A 378-amino-acid chain; its full sequence is Putative glutamate--cysteine ligase 2 (378 aa).

Belongs to the glutamate--cysteine ligase type 2 family. YbdK subfamily.

It carries out the reaction L-cysteine + L-glutamate + ATP = gamma-L-glutamyl-L-cysteine + ADP + phosphate + H(+). ATP-dependent carboxylate-amine ligase which exhibits weak glutamate--cysteine ligase activity. This is Putative glutamate--cysteine ligase 2 from Jannaschia sp. (strain CCS1).